The following is a 208-amino-acid chain: Redox-sensing transcriptional repressor Rex (208 aa).

Residues 18 to 57 (IYYRYFKLLETDGIERIKSEQLAKLVAIPSATIRRDFSYI) constitute a DNA-binding region (H-T-H motif). 92–97 (GVGNLG) contacts NAD(+).

It belongs to the transcriptional regulatory Rex family. As to quaternary structure, homodimer.

It is found in the cytoplasm. In terms of biological role, modulates transcription in response to changes in cellular NADH/NAD(+) redox state. In Latilactobacillus sakei subsp. sakei (strain 23K) (Lactobacillus sakei subsp. sakei), this protein is Redox-sensing transcriptional repressor Rex.